Here is a 271-residue protein sequence, read N- to C-terminus: ATP synthase subunit delta (271 aa).

Belongs to the ATPase delta chain family. In terms of assembly, F-type ATPases have 2 components, F(1) - the catalytic core - and F(0) - the membrane proton channel. F(1) has five subunits: alpha(3), beta(3), gamma(1), delta(1), epsilon(1). F(0) has three main subunits: a(1), b(2) and c(10-14). The alpha and beta chains form an alternating ring which encloses part of the gamma chain. F(1) is attached to F(0) by a central stalk formed by the gamma and epsilon chains, while a peripheral stalk is formed by the delta and b chains.

It localises to the cell membrane. In terms of biological role, f(1)F(0) ATP synthase produces ATP from ADP in the presence of a proton or sodium gradient. F-type ATPases consist of two structural domains, F(1) containing the extramembraneous catalytic core and F(0) containing the membrane proton channel, linked together by a central stalk and a peripheral stalk. During catalysis, ATP synthesis in the catalytic domain of F(1) is coupled via a rotary mechanism of the central stalk subunits to proton translocation. This protein is part of the stalk that links CF(0) to CF(1). It either transmits conformational changes from CF(0) to CF(1) or is implicated in proton conduction. This Corynebacterium aurimucosum (strain ATCC 700975 / DSM 44827 / CIP 107346 / CN-1) (Corynebacterium nigricans) protein is ATP synthase subunit delta.